A 120-amino-acid polypeptide reads, in one-letter code: Large ribosomal subunit protein bL20 (120 aa).

This sequence belongs to the bacterial ribosomal protein bL20 family.

Its function is as follows. Binds directly to 23S ribosomal RNA and is necessary for the in vitro assembly process of the 50S ribosomal subunit. It is not involved in the protein synthesizing functions of that subunit. The chain is Large ribosomal subunit protein bL20 from Baumannia cicadellinicola subsp. Homalodisca coagulata.